The primary structure comprises 1100 residues: Serine/threonine/tyrosine-interacting-like protein 2 (1100 aa).

The span at 1-12 shows a compositional bias: polar residues; the sequence is MASSVEDQQLQQ. The disordered stretch occupies residues 1–21; sequence MASSVEDQQLQQEEAESVKDV. The Tyrosine-protein phosphatase domain occupies 141 to 289; sequence SPVDEVWPNV…LRQLNETLME (149 aa). The segment covering 356-374 has biased composition (polar residues); the sequence is CGSQQPNMQQPADQPSLPG. Disordered stretches follow at residues 356–383, 411–436, 479–504, 542–561, 575–615, 667–686, 888–1060, and 1075–1100; these read CGSQ…EDGD, EDED…TSED, AAAR…DDVQ, KENA…APDL, KQQK…ERSR, VLSG…TPAP, CEKP…DEEI, and VAEE…HDHK. Over residues 418-428 the composition is skewed to basic and acidic residues; sequence DKTQRAVRPDD. The span at 580-615 shows a compositional bias: basic and acidic residues; the sequence is HGGEENKEEILQMSRGEDTATARRRQRREEVLERSR. A compositionally biased stretch (low complexity) spans 667–676; that stretch reads VLSGRSTRSL. A compositionally biased stretch (basic and acidic residues) spans 888-898; that stretch reads CEKPKPKRDYG. Polar residues-rich tracts occupy residues 907–916, 994–1013, and 1029–1041; these read ASANNPTSSI, SYSS…TSFA, and FQNH…SSVY. Positions 1089–1100 are enriched in basic and acidic residues; that stretch reads RKQEESKSHDHK.

It belongs to the protein-tyrosine phosphatase family. Non-receptor class dual specificity subfamily. Expressed in muscle fibers in a regular striated pattern (at protein level).

It localises to the cytoplasm. It is found in the myofibril. The protein resides in the sarcomere. Functionally, required for myofiber maturation. The polypeptide is Serine/threonine/tyrosine-interacting-like protein 2 (styxl2) (Danio rerio (Zebrafish)).